A 117-amino-acid chain; its full sequence is Large ribosomal subunit protein bL20 (117 aa).

This sequence belongs to the bacterial ribosomal protein bL20 family.

In terms of biological role, binds directly to 23S ribosomal RNA and is necessary for the in vitro assembly process of the 50S ribosomal subunit. It is not involved in the protein synthesizing functions of that subunit. The protein is Large ribosomal subunit protein bL20 of Chromohalobacter salexigens (strain ATCC BAA-138 / DSM 3043 / CIP 106854 / NCIMB 13768 / 1H11).